A 185-amino-acid chain; its full sequence is Peptidyl-tRNA hydrolase (185 aa).

Residue Tyr14 participates in tRNA binding. The active-site Proton acceptor is His19. The tRNA site is built by Tyr65, Asn67, and Asn113.

It belongs to the PTH family. In terms of assembly, monomer.

Its subcellular location is the cytoplasm. It catalyses the reaction an N-acyl-L-alpha-aminoacyl-tRNA + H2O = an N-acyl-L-amino acid + a tRNA + H(+). Its function is as follows. Hydrolyzes ribosome-free peptidyl-tRNAs (with 1 or more amino acids incorporated), which drop off the ribosome during protein synthesis, or as a result of ribosome stalling. Functionally, catalyzes the release of premature peptidyl moieties from peptidyl-tRNA molecules trapped in stalled 50S ribosomal subunits, and thus maintains levels of free tRNAs and 50S ribosomes. This chain is Peptidyl-tRNA hydrolase, found in Rickettsia prowazekii (strain Madrid E).